A 297-amino-acid chain; its full sequence is Glycerol-3-phosphate dehydrogenase [NAD(P)+] (297 aa).

Tryptophan 11, arginine 33, and lysine 79 together coordinate NADPH. Residues lysine 79, glycine 107, and serine 109 each coordinate sn-glycerol 3-phosphate. Residue alanine 111 coordinates NADPH. Positions 161, 214, 224, 225, and 226 each coordinate sn-glycerol 3-phosphate. Catalysis depends on lysine 161, which acts as the Proton acceptor. NADPH is bound at residue arginine 225. NADPH contacts are provided by valine 249 and glutamate 251.

Belongs to the NAD-dependent glycerol-3-phosphate dehydrogenase family.

The protein resides in the cytoplasm. The catalysed reaction is sn-glycerol 3-phosphate + NAD(+) = dihydroxyacetone phosphate + NADH + H(+). The enzyme catalyses sn-glycerol 3-phosphate + NADP(+) = dihydroxyacetone phosphate + NADPH + H(+). The protein operates within membrane lipid metabolism; glycerophospholipid metabolism. Catalyzes the reduction of the glycolytic intermediate dihydroxyacetone phosphate (DHAP) to sn-glycerol 3-phosphate (G3P), the key precursor for phospholipid synthesis. The protein is Glycerol-3-phosphate dehydrogenase [NAD(P)+] of Campylobacter jejuni subsp. doylei (strain ATCC BAA-1458 / RM4099 / 269.97).